The following is a 1257-amino-acid chain: Pesticidal crystal protein Cry12Aa (1257 aa).

Belongs to the delta endotoxin family.

In terms of biological role, endotoxin with nematicidal activity. This is Pesticidal crystal protein Cry12Aa (cry12Aa) from Bacillus thuringiensis.